Consider the following 167-residue polypeptide: SsrA-binding protein (167 aa).

Residues 139 to 167 are disordered; that stretch reads QAHDKRHAEKEREWQRDKQRIMRAHNRNA. Positions 144–158 are enriched in basic and acidic residues; sequence RHAEKEREWQRDKQR.

This sequence belongs to the SmpB family.

Its subcellular location is the cytoplasm. In terms of biological role, required for rescue of stalled ribosomes mediated by trans-translation. Binds to transfer-messenger RNA (tmRNA), required for stable association of tmRNA with ribosomes. tmRNA and SmpB together mimic tRNA shape, replacing the anticodon stem-loop with SmpB. tmRNA is encoded by the ssrA gene; the 2 termini fold to resemble tRNA(Ala) and it encodes a 'tag peptide', a short internal open reading frame. During trans-translation Ala-aminoacylated tmRNA acts like a tRNA, entering the A-site of stalled ribosomes, displacing the stalled mRNA. The ribosome then switches to translate the ORF on the tmRNA; the nascent peptide is terminated with the 'tag peptide' encoded by the tmRNA and targeted for degradation. The ribosome is freed to recommence translation, which seems to be the essential function of trans-translation. The sequence is that of SsrA-binding protein from Xylella fastidiosa (strain 9a5c).